Reading from the N-terminus, the 145-residue chain is Ventricular natriuretic peptide (145 aa).

Residues 1–24 (MRMGKIAVGYGFLLLLVFQLGVRA) form the signal peptide. Cys117 and Cys133 are joined by a disulfide.

The protein belongs to the natriuretic peptide family. Heart atrium and ventricle, and to a very low extent in brain.

The protein resides in the secreted. Exhibits natriuretic and vasodepressor activity. This Acipenser transmontanus (White sturgeon) protein is Ventricular natriuretic peptide (vnp).